The sequence spans 226 residues: 2-C-methyl-D-erythritol 4-phosphate cytidylyltransferase (226 aa).

This sequence belongs to the IspD/TarI cytidylyltransferase family. IspD subfamily.

The catalysed reaction is 2-C-methyl-D-erythritol 4-phosphate + CTP + H(+) = 4-CDP-2-C-methyl-D-erythritol + diphosphate. The protein operates within isoprenoid biosynthesis; isopentenyl diphosphate biosynthesis via DXP pathway; isopentenyl diphosphate from 1-deoxy-D-xylulose 5-phosphate: step 2/6. Its function is as follows. Catalyzes the formation of 4-diphosphocytidyl-2-C-methyl-D-erythritol from CTP and 2-C-methyl-D-erythritol 4-phosphate (MEP). This is 2-C-methyl-D-erythritol 4-phosphate cytidylyltransferase from Prochlorococcus marinus (strain SARG / CCMP1375 / SS120).